We begin with the raw amino-acid sequence, 409 residues long: Lissencephaly-1 homolog (409 aa).

The LisH domain maps to 7-39; sequence QREELNQAIADYLGTNGYADSLEAFRKEADLST. Residues 54 to 81 adopt a coiled-coil conformation; it reads TSVIRLQKKVMELEAKLTEAEKEVIEGA. WD repeat units lie at residues 104–145, 146–185, 189–228, 231–270, 273–332, 335–374, and 377–409; these read GHRA…RSLK, GHTDSVQDVAFDAQGKLLVSCSADLSIKLWDFQQSYACVK, GHDHNVSSVAFVPAGDYVLSASRDRTIKMWEVATGYCVKT, GHREWVRMVRVHIEGSLFATCSNDHTIRVWLTNSKDCKVE, DHEH…CLLT, GHDNWVRGLAFHPGGKYLVSASDDKTIRVWDLRNKRCMKT, and AHQHFCTSIDFHKAHPYVISGSVDQTVKVWECR.

This sequence belongs to the WD repeat LIS1/nudF family.

The protein resides in the cytoplasm. It is found in the cytoskeleton. The protein localises to the microtubule organizing center. It localises to the centrosome. In terms of biological role, positively regulates the activity of the minus-end directed microtubule motor protein dynein. May enhance dynein-mediated microtubule sliding by targeting dynein to the microtubule plus end. Required for several dynein- and microtubule-dependent processes. This chain is Lissencephaly-1 homolog, found in Drosophila willistoni (Fruit fly).